Here is a 1190-residue protein sequence, read N- to C-terminus: Tight junction protein 2 (1190 aa).

Position 16 is a phosphoserine (serine 16). The region spanning threonine 33–arginine 120 is the PDZ 1 domain. Phosphoserine is present on residues serine 130, serine 150, serine 153, serine 163, serine 168, serine 170, serine 174, serine 200, serine 220, serine 232, serine 244, serine 266, serine 325, serine 398, serine 400, serine 406, serine 415, serine 424, serine 430, and serine 431. Positions arginine 152–isoleucine 306 are disordered. Basic and acidic residues predominate over residues arginine 169–histidine 291. A PDZ 2 domain is found at glycine 307 to serine 385. A disordered region spans residues isoleucine 408–tyrosine 506. A compositionally biased stretch (basic and acidic residues) spans serine 415–proline 446. Threonine 455 is subject to Phosphothreonine. Serine 499 bears the Phosphoserine mark. A PDZ 3 domain is found at asparagine 509–serine 590. A Phosphotyrosine modification is found at tyrosine 574. In terms of domain architecture, SH3 spans glycine 604 to alanine 669. Residues asparagine 678–glutamine 876 enclose the Guanylate kinase-like domain. Serine 702 and serine 902 each carry phosphoserine. Phosphothreonine is present on threonine 905. Phosphoserine is present on residues serine 913 and serine 920. 2 disordered regions span residues serine 920–leucine 1079 and asparagine 1105–leucine 1190. A phosphothreonine mark is found at threonine 925 and threonine 933. Residues valine 956–proline 967 are compositionally biased toward basic and acidic residues. Serine 966, serine 978, serine 986, serine 1006, serine 1067, and serine 1068 each carry phosphoserine. Basic and acidic residues predominate over residues glutamate 994–glutamate 1014. Residues glutamate 1060–aspartate 1072 are compositionally biased toward acidic residues. Phosphotyrosine is present on tyrosine 1118. The residue at position 1131 (threonine 1131) is a Phosphothreonine. Phosphoserine is present on residues serine 1147 and serine 1159. Basic and acidic residues predominate over residues tyrosine 1166–lysine 1175. The tract at residues threonine 1188–leucine 1190 is interaction with SCRIB.

This sequence belongs to the MAGUK family. Homodimer. Interacts (via PDZ2 domain) with TJP1/ZO1 (via PDZ2 domain). Interacts with OCLN. Interacts with UBN1. Interacts with SAFB in the nucleus. Interacts with SCRIB. Interacts with USP53 (via the C-terminal region). Interacts with claudins, including CLDN1, CLDN2, CLDN3, CLDN5 and CLDN7. Interacts with CLDN18. Interacts (via N-terminus) with CTNNA1. As to expression, this protein is found in epithelial cell junctions. Isoform A1 is abundant in the heart and brain. Detected in brain and skeletal muscle. It is present almost exclusively in normal tissues. Isoform C1 is expressed at high level in the kidney, pancreas, heart and placenta. Not detected in brain and skeletal muscle. Found in normal as well as in most neoplastic tissues.

It is found in the cell junction. The protein resides in the adherens junction. It localises to the cell membrane. Its subcellular location is the tight junction. The protein localises to the nucleus. Plays a role in tight junctions and adherens junctions. Acts as a positive regulator of RANKL-induced osteoclast differentiation, potentially via mediating downstream transcriptional activity. The sequence is that of Tight junction protein 2 from Homo sapiens (Human).